Reading from the N-terminus, the 383-residue chain is Acetylornithine deacetylase (383 aa).

His-80 serves as a coordination point for Zn(2+). Asp-82 is a catalytic residue. Asp-112 is a binding site for Zn(2+). Residue Glu-144 is part of the active site. 3 residues coordinate Zn(2+): Glu-145, Glu-169, and His-355.

The protein belongs to the peptidase M20A family. ArgE subfamily. Homodimer. Zn(2+) is required as a cofactor. It depends on Co(2+) as a cofactor. The cofactor is glutathione.

It localises to the cytoplasm. It carries out the reaction N(2)-acetyl-L-ornithine + H2O = L-ornithine + acetate. It functions in the pathway amino-acid biosynthesis; L-arginine biosynthesis; L-ornithine from N(2)-acetyl-L-ornithine (linear): step 1/1. Functionally, catalyzes the hydrolysis of the amide bond of N(2)-acetylated L-amino acids. Cleaves the acetyl group from N-acetyl-L-ornithine to form L-ornithine, an intermediate in L-arginine biosynthesis pathway, and a branchpoint in the synthesis of polyamines. This is Acetylornithine deacetylase from Escherichia coli O139:H28 (strain E24377A / ETEC).